Consider the following 467-residue polypeptide: Pachytene checkpoint protein 2 homolog (467 aa).

ATP is bound at residue 209–216; the sequence is GPPGTGKT.

This sequence belongs to the AAA ATPase family. PCH2 subfamily.

The protein resides in the chromosome. Its function is as follows. Plays a key role in chromosome recombination during meiosis. Mediates meiotic chromosome remodeling and crossover maturation. The polypeptide is Pachytene checkpoint protein 2 homolog (Arabidopsis thaliana (Mouse-ear cress)).